Consider the following 339-residue polypeptide: Ketol-acid reductoisomerase (NADP(+)) (339 aa).

The region spanning 1–182 is the KARI N-terminal Rossmann domain; that stretch reads MRVYYDRDAD…GGGRSGIIET (182 aa). NADP(+) contacts are provided by residues 24–27, Lys-48, Ser-51, Thr-53, and 83–86; these read YGSQ and DELQ. The active site involves His-108. NADP(+) is bound at residue Gly-134. The KARI C-terminal knotted domain maps to 183-328; that stretch reads NFKEECETDL…AKLRGMMPWI (146 aa). Mg(2+)-binding residues include Asp-191, Glu-195, Glu-227, and Glu-231. Position 252 (Ser-252) interacts with substrate.

The protein belongs to the ketol-acid reductoisomerase family. It depends on Mg(2+) as a cofactor.

The catalysed reaction is (2R)-2,3-dihydroxy-3-methylbutanoate + NADP(+) = (2S)-2-acetolactate + NADPH + H(+). It catalyses the reaction (2R,3R)-2,3-dihydroxy-3-methylpentanoate + NADP(+) = (S)-2-ethyl-2-hydroxy-3-oxobutanoate + NADPH + H(+). The protein operates within amino-acid biosynthesis; L-isoleucine biosynthesis; L-isoleucine from 2-oxobutanoate: step 2/4. It participates in amino-acid biosynthesis; L-valine biosynthesis; L-valine from pyruvate: step 2/4. Its function is as follows. Involved in the biosynthesis of branched-chain amino acids (BCAA). Catalyzes an alkyl-migration followed by a ketol-acid reduction of (S)-2-acetolactate (S2AL) to yield (R)-2,3-dihydroxy-isovalerate. In the isomerase reaction, S2AL is rearranged via a Mg-dependent methyl migration to produce 3-hydroxy-3-methyl-2-ketobutyrate (HMKB). In the reductase reaction, this 2-ketoacid undergoes a metal-dependent reduction by NADPH to yield (R)-2,3-dihydroxy-isovalerate. The polypeptide is Ketol-acid reductoisomerase (NADP(+)) (Agrobacterium fabrum (strain C58 / ATCC 33970) (Agrobacterium tumefaciens (strain C58))).